A 312-amino-acid chain; its full sequence is UDP-N-acetylenolpyruvoylglucosamine reductase (312 aa).

The 167-residue stretch at Arg33–Gly199 folds into the FAD-binding PCMH-type domain. The active site involves Arg178. The active-site Proton donor is the Ser229. The active site involves Glu299.

The protein belongs to the MurB family. FAD serves as cofactor.

It is found in the cytoplasm. It carries out the reaction UDP-N-acetyl-alpha-D-muramate + NADP(+) = UDP-N-acetyl-3-O-(1-carboxyvinyl)-alpha-D-glucosamine + NADPH + H(+). The protein operates within cell wall biogenesis; peptidoglycan biosynthesis. Its function is as follows. Cell wall formation. The protein is UDP-N-acetylenolpyruvoylglucosamine reductase of Synechococcus sp. (strain JA-3-3Ab) (Cyanobacteria bacterium Yellowstone A-Prime).